A 123-amino-acid polypeptide reads, in one-letter code: Large ribosomal subunit protein uL14c (123 aa).

Belongs to the universal ribosomal protein uL14 family. In terms of assembly, part of the 50S ribosomal subunit.

Its subcellular location is the plastid. It is found in the chloroplast. Functionally, binds to 23S rRNA. This is Large ribosomal subunit protein uL14c from Saccharum hybrid (Sugarcane).